The sequence spans 260 residues: Cytosolic Fe-S cluster assembly factor Nubp2 homolog 2 (260 aa).

Residue 14-21 (GKGGVGKS) participates in ATP binding. The [4Fe-4S] cluster site is built by Cys188 and Cys191.

It belongs to the Mrp/NBP35 ATP-binding proteins family. NUBP2/CFD1 subfamily. As to quaternary structure, heterotetramer of 2 Nubp1 and 2 Nubp2 chains. Requires [4Fe-4S] cluster as cofactor.

It is found in the cytoplasm. In terms of biological role, component of the cytosolic iron-sulfur (Fe/S) protein assembly (CIA) machinery. Required for maturation of extramitochondrial Fe-S proteins. The Nubp1-Nubp2 heterotetramer forms a Fe-S scaffold complex, mediating the de novo assembly of an Fe-S cluster and its transfer to target apoproteins. The protein is Cytosolic Fe-S cluster assembly factor Nubp2 homolog 2 of Drosophila yakuba (Fruit fly).